Here is a 577-residue protein sequence, read N- to C-terminus: 9-cis-epoxycarotenoid dioxygenase NCED6, chloroplastic (577 aa).

Residues 1–25 (MQHSLRSDLLPTKTSPRSHLLPQPK) form a disordered region. Fe cation is bound by residues His-276, His-325, His-390, and His-563.

This sequence belongs to the carotenoid oxygenase family. The cofactor is Fe(2+). As to expression, expressed before fertilization in male and female gametophytes, and then immediately after pollination, restricted to seed endosperm.

Its subcellular location is the plastid. The protein resides in the chloroplast stroma. The enzyme catalyses a 9-cis-epoxycarotenoid + O2 = a 12'-apo-carotenal + 2-cis,4-trans-xanthoxin. It catalyses the reaction 9-cis-violaxanthin + O2 = (3S,5R,6S)-5,6-epoxy-3-hydroxy-5,6-dihydro-12'-apo-beta-caroten-12'-al + 2-cis,4-trans-xanthoxin. The catalysed reaction is 9'-cis-neoxanthin + O2 = (3S,5R,6R)-3,5-dihydroxy-6,7-didehydro-5,6-dihydro-12'-apo-beta-caroten-12'-al + 2-cis,4-trans-xanthoxin. Functionally, has a 11,12(11',12') 9-cis epoxycarotenoid cleavage activity. Catalyzes the first step of abscisic-acid biosynthesis from carotenoids. Contributes probably to abscisic acid synthesis for the induction of seed dormancy. This Arabidopsis thaliana (Mouse-ear cress) protein is 9-cis-epoxycarotenoid dioxygenase NCED6, chloroplastic (NCED6).